The sequence spans 711 residues: Zinc finger CCCH domain-containing protein 43 (711 aa).

Residues 1–49 (MPQDDDWFWGRPTPVVVGDGETTSKPKPPVAGKTKKVEEQHPRRPGEPD) are disordered. The segment covering 35-47 (KKVEEQHPRRPGE) has biased composition (basic and acidic residues). C3H1-type zinc fingers lie at residues 44–72 (RPGEPDCSYYVKFGSCKFGISCVYNHPDP), 90–118 (RPGEPDCSYYVKFGSCKFGMNCRFNHPPR), and 157–185 (RPGTGLCSYYMNRGICKFGTNCKFDHPDP). The region spanning 384–637 (LKTLKSILNT…GAISYLIEKE (254 aa)) is the MIF4G domain.

The protein is Zinc finger CCCH domain-containing protein 43 of Oryza sativa subsp. japonica (Rice).